Reading from the N-terminus, the 619-residue chain is CREB-regulated transcription coactivator 3 (619 aa).

The required for interaction with HTLV-1 TAX stretch occupies residues 1–103; that stretch reads MAASPGSGSA…LVERPSRNRF (103 aa). 2 positions are modified to phosphoserine: Ser-4 and Ser-62. The interval 103 to 150 is disordered; that stretch reads FHPLHRRSGDKPGRQFDGSAFGANYSSQPLDESWPRQQPPWKDEKHPG. Thr-160 bears the Phosphothreonine mark. Ser-162 carries the post-translational modification Phosphoserine; by SIK2. Residues 165-175 are compositionally biased toward polar residues; that stretch reads ALHTSALSTKP. Residues 165-185 form a disordered region; the sequence is ALHTSALSTKPQDPYGGGGQS. Residue Lys-232 forms a Glycyl lysine isopeptide (Lys-Gly) (interchain with G-Cter in SUMO2) linkage. 8 positions are modified to phosphoserine: Ser-273, Ser-329, Ser-332, Ser-370, Ser-391, Ser-396, Ser-410, and Ser-443. Residues 375–431 are disordered; sequence STTNLSGPSRRRQPPVSPLTLSPGPEAHQGFSRQLSSTSPLAPYPTSQMVSSDRSQL. The required for interaction with PPP2CA and PPP2R1A stretch occupies residues 380-401; sequence SGPSRRRQPPVSPLTLSPGPEA. The segment covering 405–431 has biased composition (polar residues); it reads FSRQLSSTSPLAPYPTSQMVSSDRSQL.

The protein belongs to the TORC family. In terms of assembly, binding, as a tetramer, through its N-terminal region, with the bZIP domain of CREB1 enhances recruitment of TAF4 to the promoter. 'Arg-314' in the bZIP domain of CREB1 is essential for this interaction. Interacts (when phosphorylated at Ser-162 and Se-273) with 14-3-3 proteins. Interacts with YWHAE. Interacts (when phosphorylated at Ser-391) with phosphatase PP2A catalytic subunit PPP2CA and regulatory subunits PPP2R1A and PPP2R2A. Interacts, via the N-terminal with the ankyrin repeats of BCL3, to form a complex with CREB1 on CRE and TxRE responsive elements and represses HTLV-1 LTR-mediated transcription. As to quaternary structure, (Microbial infection) Interacts with HTLV-1 protein Tax; this interaction enhances tax transcriptional activity. In terms of processing, phosphorylation/dephosphorylation states of Ser-273 are required for regulating transduction of CREB activity. CRTCs/TORCs are inactive when phosphorylated, and active when dephosphorylated at this site. May be phosphorylated at Ser-391 by MAPK3/ERK1 and/or MAPK1/ERK2 or by some cyclin-dependent kinases such as CDK1,CDK2 or CDK5. Following adenylyl cyclase activation, dephosphorylated at Ser-162 and Ser-273 resulting in its dissociation from 14-3-3 proteins probably promoting CRTC3 translocation into the nucleus. Predominantly expressed in B and T lymphocytes. Highest levels in lung. Also expressed in brain, colon, heart, kidney, ovary, and prostate. Weak expression in liver, pancreas, muscle, small intestine, spleen and stomach.

It is found in the nucleus. The protein resides in the cytoplasm. Transcriptional coactivator for CREB1 which activates transcription through both consensus and variant cAMP response element (CRE) sites. Acts as a coactivator, in the SIK/TORC signaling pathway, being active when dephosphorylated and acts independently of CREB1 'Ser-133' phosphorylation. Enhances the interaction of CREB1 with TAF4. Regulates the expression of specific CREB-activated genes such as the steroidogenic gene, StAR. Potent coactivator of PPARGC1A and inducer of mitochondrial biogenesis in muscle cells. Also coactivator for TAX activation of the human T-cell leukemia virus type 1 (HTLV-1) long terminal repeats (LTR). This chain is CREB-regulated transcription coactivator 3 (CRTC3), found in Homo sapiens (Human).